The following is a 521-amino-acid chain: Bifunctional purine biosynthesis protein PurH (521 aa).

The 147-residue stretch at 1–147 (MAKITRALIS…KNNADVTVVV (147 aa)) folds into the MGS-like domain.

The protein belongs to the PurH family.

The enzyme catalyses (6R)-10-formyltetrahydrofolate + 5-amino-1-(5-phospho-beta-D-ribosyl)imidazole-4-carboxamide = 5-formamido-1-(5-phospho-D-ribosyl)imidazole-4-carboxamide + (6S)-5,6,7,8-tetrahydrofolate. The catalysed reaction is IMP + H2O = 5-formamido-1-(5-phospho-D-ribosyl)imidazole-4-carboxamide. It participates in purine metabolism; IMP biosynthesis via de novo pathway; 5-formamido-1-(5-phospho-D-ribosyl)imidazole-4-carboxamide from 5-amino-1-(5-phospho-D-ribosyl)imidazole-4-carboxamide (10-formyl THF route): step 1/1. The protein operates within purine metabolism; IMP biosynthesis via de novo pathway; IMP from 5-formamido-1-(5-phospho-D-ribosyl)imidazole-4-carboxamide: step 1/1. This chain is Bifunctional purine biosynthesis protein PurH, found in Geotalea uraniireducens (strain Rf4) (Geobacter uraniireducens).